A 487-amino-acid polypeptide reads, in one-letter code: Complement C1r subcomponent-like protein (487 aa).

The first 35 residues, 1–35 (MPGPRVWGKYLWRSPHSKGCPGAMWWLLLWGVLQA), serve as a signal peptide directing secretion. One can recognise a CUB domain in the interval 39 to 163 (RGSVLLAQEL…KGFLALYQTV (125 aa)). An intrachain disulfide couples Cys94 to Cys112. N-linked (GlcNAc...) asparagine glycosylation is found at Asn147 and Asn166. A Sushi domain is found at 165 to 230 (VNYSQPISEA…DGEEVLQCMP (66 aa)). Cys195 and Cys228 form a disulfide bridge. The N-linked (GlcNAc...) (complex) asparagine glycan is linked to Asn242. One can recognise a Peptidase S1 domain in the interval 245–484 (TLGSSRAKLG…YVDWIKGVMN (240 aa)). His283 (charge relay system) is an active-site residue. Asn296 carries an N-linked (GlcNAc...) asparagine glycan. Asp339 serves as the catalytic Charge relay system. Residue Asn363 is glycosylated (N-linked (GlcNAc...) asparagine). 2 disulfide bridges follow: Cys402/Cys421 and Cys432/Cys462. Ser436 (charge relay system) is an active-site residue.

This sequence belongs to the peptidase S1 family. Highly expressed in placenta, liver, kidney, pancreas, moderately in lung, spleen, prostate, ovary, colon, and PBL, and weakly in heart, skeletal muscle, thymus, testis, and small intestine. Expressed in PC-3 (prostate adenocarcinoma) and SK-OV-3 (ovary adenocarcinoma) cells, but not in LoVo and HT-29 (colon adenocarcinoma), SMMC7721 (hepatocellular carcinoma), CaoV-3 (ovary adenocarcinoma), HeLa (cervix epithelioid carcinoma), MCF-7 (breast adenocarcinoma), U-251MG (glioma) or A-549 (lung carcinoma) cells. Widely expressed in myeloid leukemia cell lines, including K-562 (chronic myelogenous leukemia), THP-1 (myelomonocytic leukemia), HL-60 and NB4 (promyelocytic leukemia), and KG-1 (acute myelogenous leukemia) cells. Expressed mainly in the liver and in serum (at protein level).

It localises to the secreted. Functionally, mediates the proteolytic cleavage of HP/haptoglobin in the endoplasmic reticulum. The polypeptide is Complement C1r subcomponent-like protein (C1RL) (Homo sapiens (Human)).